Consider the following 344-residue polypeptide: Fructose-1,6-bisphosphatase, cytosolic (344 aa).

Mg(2+) is bound by residues Glu-71, Glu-100, Asp-121, Leu-123, and Asp-124. Residues 124–127 (DGSS), Asn-215, Tyr-247, Tyr-267, and Lys-277 contribute to the substrate site. Glu-283 contacts Mg(2+).

It belongs to the FBPase class 1 family. Mg(2+) serves as cofactor.

It is found in the cytoplasm. The catalysed reaction is beta-D-fructose 1,6-bisphosphate + H2O = beta-D-fructose 6-phosphate + phosphate. This is Fructose-1,6-bisphosphatase, cytosolic from Oryza coarctata (Wild rice).